The following is a 210-amino-acid chain: Thymidylate kinase (210 aa).

10-17 contacts ATP; sequence GPDGAGKT.

Belongs to the thymidylate kinase family.

It carries out the reaction dTMP + ATP = dTDP + ADP. Functionally, phosphorylation of dTMP to form dTDP in both de novo and salvage pathways of dTTP synthesis. In Geobacillus sp. (strain WCH70), this protein is Thymidylate kinase.